The sequence spans 346 residues: 3 beta-hydroxysteroid dehydrogenase/Delta 5--&gt;4-isomerase (346 aa).

Tyrosine 147 functions as the Proton acceptor in the catalytic mechanism. Lysine 151 provides a ligand contact to NAD(+).

It belongs to the 3-beta-HSD family.

It catalyses the reaction a 3beta-hydroxy-Delta(5)-steroid + NAD(+) = a 3-oxo-Delta(5)-steroid + NADH + H(+). The catalysed reaction is a 3-oxo-Delta(5)-steroid = a 3-oxo-Delta(4)-steroid. Its pathway is lipid metabolism; steroid biosynthesis. In terms of biological role, catalyzes the oxidative conversion of Delta(5)-ene-3-beta-hydroxy steroid, and the oxidative conversion of ketosteroids. The 3-beta-HSD enzymatic system plays a crucial role in the biosynthesis of all classes of hormonal steroids. During viral infection, steroid production contributes to virulence by inhibiting the host inflammatory response. The sequence is that of 3 beta-hydroxysteroid dehydrogenase/Delta 5--&gt;4-isomerase (OPG174) from Monkeypox virus.